The primary structure comprises 90 residues: Phosphocarrier protein HPr (90 aa).

The HPr domain occupies 1–89 (MPAREITIIN…ELINNFFDEG (89 aa)). Histidine 15 functions as the Pros-phosphohistidine intermediate in the catalytic mechanism.

Belongs to the HPr family.

It localises to the cytoplasm. Functionally, general (non sugar-specific) component of the phosphoenolpyruvate-dependent sugar phosphotransferase system (sugar PTS). This major carbohydrate active-transport system catalyzes the phosphorylation of incoming sugar substrates concomitantly with their translocation across the cell membrane. The phosphoryl group from phosphoenolpyruvate (PEP) is transferred to the phosphoryl carrier protein HPr by enzyme I. Phospho-HPr then transfers it to the PTS EIIA domain. The protein is Phosphocarrier protein HPr (ptsH) of Pseudomonas putida (Arthrobacter siderocapsulatus).